Here is an 88-residue protein sequence, read N- to C-terminus: RNA-binding protein Hfq (88 aa).

The region spanning 9 to 68 (DPYLNVLRKERVPVSIYLVNGIKLQGQVESFDQFVVLLKNTVSQMVYKHAISTVVPSRAV) is the Sm domain.

It belongs to the Hfq family. Homohexamer.

RNA chaperone that binds small regulatory RNA (sRNAs) and mRNAs to facilitate mRNA translational regulation in response to envelope stress, environmental stress and changes in metabolite concentrations. Also binds with high specificity to tRNAs. The protein is RNA-binding protein Hfq of Cellvibrio japonicus (strain Ueda107) (Pseudomonas fluorescens subsp. cellulosa).